The following is a 449-amino-acid chain: Elongation factor 1-alpha 1 (449 aa).

The tr-type G domain occupies 5-230 (KVHMNLVVVG…DMLEPPVRPS (226 aa)). The segment at 14–21 (GHVDAGKS) is G1. Residue 14–21 (GHVDAGKS) participates in GTP binding. Positions 70–74 (GITID) are G2. Residues 91–94 (DAPG) are G3. Residues 91–95 (DAPGH) and 153–156 (NKMD) each bind GTP. The segment at 153 to 156 (NKMD) is G4. The tract at residues 194-196 (SGW) is G5. Residue Glu-362 is modified to 5-glutamyl glycerylphosphorylethanolamine.

It belongs to the TRAFAC class translation factor GTPase superfamily. Classic translation factor GTPase family. EF-Tu/EF-1A subfamily. In terms of processing, phosphatidylethanolamine (PE) is a direct precursor of the ethanolamine-phosphoglycerol (EPG) moiety.

It localises to the cytoplasm. In terms of biological role, this protein promotes the GTP-dependent binding of aminoacyl-tRNA to the A-site of ribosomes during protein biosynthesis. This chain is Elongation factor 1-alpha 1 (TEF1), found in Trypanosoma brucei brucei (strain 927/4 GUTat10.1).